The primary structure comprises 707 residues: Matrix metalloproteinase-9 (707 aa).

An N-terminal signal peptide occupies residues 1-19 (MSPRQPLVLALLVLGCCSA). Positions 20-106 (APRRRQPTLV…PRCGVPDVGK (87 aa)) are cleaved as a propeptide — activation peptide. Residue asparagine 88 is glycosylated (N-linked (GlcNAc...) asparagine). The Cysteine switch signature appears at 97-104 (PRCGVPDV). Cysteine 99 contributes to the Zn(2+) binding site. 2 N-linked (GlcNAc...) asparagine glycosylation sites follow: asparagine 120 and asparagine 127. Ca(2+) contacts are provided by aspartate 131 and aspartate 165. Zn(2+) is bound by residues histidine 175 and aspartate 177. Residues aspartate 182, glycine 183, aspartate 185, and leucine 187 each contribute to the Ca(2+) site. Histidine 190 is a binding site for Zn(2+). Ca(2+) contacts are provided by glycine 197, glutamine 199, and aspartate 201. Histidine 203 serves as a coordination point for Zn(2+). The Ca(2+) site is built by aspartate 205, aspartate 206, and glutamate 208. 3 Fibronectin type-II domains span residues 225–273 (ADGA…FCPS), 283–331 (ADGK…FCPT), and 342–390 (SAGE…FCPD). 6 disulfides stabilise this stretch: cysteine 230-cysteine 256, cysteine 244-cysteine 271, cysteine 288-cysteine 314, cysteine 302-cysteine 329, cysteine 347-cysteine 373, and cysteine 361-cysteine 388. Residue histidine 401 participates in Zn(2+) binding. The active site involves glutamate 402. The Zn(2+) site is built by histidine 405 and histidine 411. The disordered stretch occupies residues 437–508 (RGIQHLYGPN…ASPSAAPTAS (72 aa)). The segment covering 446-467 (NPNPQPPATTTPEPQPTAPPTA) has biased composition (pro residues). Low complexity predominate over residues 481–493 (PTTSPTGAPSAGP). Cysteine 516 and cysteine 704 are joined by a disulfide. Hemopexin repeat units lie at residues 518–563 (VNVF…WPAL), 564–608 (PAKL…GLGP), 610–657 (VPHV…FPGV), and 658–704 (PLNT…ILHC).

This sequence belongs to the peptidase M10A family. Exists as monomer or homodimer; disulfide-linked. Also exists as heterodimer with LCN2. Macrophages and transformed cell lines produce only the monomeric form. Interacts with ECM1. It depends on Zn(2+) as a cofactor. The cofactor is Ca(2+). N- and O-glycosylated. Osteoclasts.

It localises to the secreted. Its subcellular location is the extracellular space. It is found in the extracellular matrix. It carries out the reaction Cleavage of gelatin types I and V and collagen types IV and V.. Matrix metalloproteinase that plays an essential role in local proteolysis of the extracellular matrix and in leukocyte migration. Could play a role in bone osteoclastic resorption. Cleaves KiSS1 at a Gly-|-Leu bond. Cleaves NINJ1 to generate the Secreted ninjurin-1 form. Cleaves type IV and type V collagen into large C-terminal three quarter fragments and shorter N-terminal one quarter fragments. Degrades fibronectin but not laminin or Pz-peptide. The protein is Matrix metalloproteinase-9 of Oryctolagus cuniculus (Rabbit).